The chain runs to 138 residues: uncharacterized protein (138 aa).

This is an uncharacterized protein from Methanocaldococcus jannaschii (strain ATCC 43067 / DSM 2661 / JAL-1 / JCM 10045 / NBRC 100440) (Methanococcus jannaschii).